A 98-amino-acid chain; its full sequence is Class II hydrophobin 1 (98 aa).

The N-terminal stretch at 1-16 is a signal peptide; it reads MQFFTTVVLFAAAAMA. Disulfide bonds link C29-C79, C39-C70, C40-C52, and C80-C92.

The protein belongs to the cerato-ulmin hydrophobin family. In terms of assembly, homodimer. Homodimers further self-assemble to form highly ordered films at water-air interfaces through intermolecular interactions. In terms of tissue distribution, expressed in mycelium, conidiating mycelium and aerial hyphae.

The protein localises to the secreted. Its subcellular location is the cell wall. Aerial growth, conidiation, and dispersal of filamentous fungi in the environment rely upon a capability of their secreting small amphipathic proteins called hydrophobins (HPBs) with low sequence identity. Class I can self-assemble into an outermost layer of rodlet bundles on aerial cell surfaces, conferring cellular hydrophobicity that supports fungal growth, development and dispersal; whereas Class II form highly ordered films at water-air interfaces through intermolecular interactions but contribute nothing to the rodlet structure. Hyd1 is a class II hydrophobin that plays probably a role during conidiophore development and in intraspecific signaling or hyphal fusion. Hyd1 and Hyd3 are jointly required for conidial hydrophobicity and dispersal, but seem not to be involved in mycelia hydrophobicity. Inhibits conidial germination in environments not suitable for mycelial growth. Not necessary for root adhesion and colonization. This Bionectria ochroleuca (Gliocladium roseum) protein is Class II hydrophobin 1.